The sequence spans 263 residues: Malonyl-[acyl-carrier protein] O-methyltransferase (263 aa).

It belongs to the methyltransferase superfamily.

The enzyme catalyses malonyl-[ACP] + S-adenosyl-L-methionine = malonyl-[ACP] methyl ester + S-adenosyl-L-homocysteine. The protein operates within cofactor biosynthesis; biotin biosynthesis. In terms of biological role, converts the free carboxyl group of a malonyl-thioester to its methyl ester by transfer of a methyl group from S-adenosyl-L-methionine (SAM). It allows to synthesize pimeloyl-ACP via the fatty acid synthetic pathway. The chain is Malonyl-[acyl-carrier protein] O-methyltransferase from Chlorobium luteolum (strain DSM 273 / BCRC 81028 / 2530) (Pelodictyon luteolum).